The following is a 212-amino-acid chain: Ribosomal RNA large subunit methyltransferase E (212 aa).

The tract at residues 1–26 (MPAERPSVSQKPKNPYKRPDAFTKAA) is disordered. The S-adenosyl-L-methionine site is built by Gly-63, Trp-65, Asp-83, Asp-101, and Asp-122. The active-site Proton acceptor is Lys-162.

Belongs to the class I-like SAM-binding methyltransferase superfamily. RNA methyltransferase RlmE family.

The protein localises to the cytoplasm. It carries out the reaction uridine(2552) in 23S rRNA + S-adenosyl-L-methionine = 2'-O-methyluridine(2552) in 23S rRNA + S-adenosyl-L-homocysteine + H(+). Functionally, specifically methylates the uridine in position 2552 of 23S rRNA at the 2'-O position of the ribose in the fully assembled 50S ribosomal subunit. This chain is Ribosomal RNA large subunit methyltransferase E, found in Sorangium cellulosum (strain So ce56) (Polyangium cellulosum (strain So ce56)).